The following is a 216-amino-acid chain: 3-isopropylmalate dehydratase small subunit (216 aa).

The protein belongs to the LeuD family. LeuD type 1 subfamily. Heterodimer of LeuC and LeuD.

The enzyme catalyses (2R,3S)-3-isopropylmalate = (2S)-2-isopropylmalate. The protein operates within amino-acid biosynthesis; L-leucine biosynthesis; L-leucine from 3-methyl-2-oxobutanoate: step 2/4. In terms of biological role, catalyzes the isomerization between 2-isopropylmalate and 3-isopropylmalate, via the formation of 2-isopropylmaleate. The protein is 3-isopropylmalate dehydratase small subunit of Acinetobacter baylyi (strain ATCC 33305 / BD413 / ADP1).